Here is a 981-residue protein sequence, read N- to C-terminus: Rab3 GTPase-activating protein catalytic subunit (981 aa).

Phosphoserine occurs at positions 83, 379, 537, 579, 581, and 590. The disordered stretch occupies residues 592 to 613; sequence TEELKGNGQESGKKGGPKEMAN. Residue S664 is modified to Phosphoserine. Phosphothreonine is present on T908. A disordered region spans residues 908–937; it reads TPPEEELKRMGSPEERRQNSVSDFPPPAGR. The span at 912–925 shows a compositional bias: basic and acidic residues; sequence EELKRMGSPEERRQ.

The protein belongs to the Rab3-GAP catalytic subunit family. As to quaternary structure, the Rab3 GTPase-activating complex is a heterodimer composed of RAB3GAP1 and RAB3GAP2. The Rab3 GTPase-activating complex interacts with DMXL2. Interacts with LMAN1. In terms of tissue distribution, ubiquitous.

The protein resides in the cytoplasm. It localises to the endoplasmic reticulum. Its subcellular location is the golgi apparatus. The protein localises to the cis-Golgi network. Functionally, catalytic subunit of the Rab3 GTPase-activating (Rab3GAP) complex composed of RAB3GAP1 and RAB3GAP2, which has GTPase-activating protein (GAP) activity towards various Rab3 subfamily members (RAB3A, RAB3B, RAB3C and RAB3D), RAB5A and RAB43, and guanine nucleotide exchange factor (GEF) activity towards RAB18. As part of the Rab3GAP complex, acts as a GAP for Rab3 proteins by converting active RAB3-GTP to the inactive form RAB3-GDP. Rab3 proteins are involved in regulated exocytosis of neurotransmitters and hormones. The Rab3GAP complex, acts as a GEF for RAB18 by promoting the conversion of inactive RAB18-GDP to the active form RAB18-GTP. Recruits and stabilizes RAB18 at the cis-Golgi membrane in fibroblasts where RAB18 is most likely activated. Also involved in RAB18 recruitment at the endoplasmic reticulum (ER) membrane where it maintains proper ER structure. Required for normal eye and brain development. May participate in neurodevelopmental processes such as proliferation, migration and differentiation before synapse formation, and non-synaptic vesicular release of neurotransmitters. The protein is Rab3 GTPase-activating protein catalytic subunit of Homo sapiens (Human).